We begin with the raw amino-acid sequence, 469 residues long: Uronate isomerase (469 aa).

Belongs to the metallo-dependent hydrolases superfamily. Uronate isomerase family.

It catalyses the reaction D-glucuronate = D-fructuronate. It carries out the reaction aldehydo-D-galacturonate = keto-D-tagaturonate. It functions in the pathway carbohydrate metabolism; pentose and glucuronate interconversion. The sequence is that of Uronate isomerase from Yersinia enterocolitica serotype O:8 / biotype 1B (strain NCTC 13174 / 8081).